A 792-amino-acid chain; its full sequence is Phenylalanine--tRNA ligase beta subunit (792 aa).

The tRNA-binding domain maps to 39 to 150 (GDEITNVVTG…ENTPIGKDIK (112 aa)). One can recognise a B5 domain in the interval 404–479 (SEPNIVEVDY…RIYGYNKVPS (76 aa)). Positions 457, 463, 466, and 467 each coordinate Mg(2+). The region spanning 699–792 (PKFPTVTRDI…LEHVLGAELR (94 aa)) is the FDX-ACB domain.

It belongs to the phenylalanyl-tRNA synthetase beta subunit family. Type 1 subfamily. As to quaternary structure, tetramer of two alpha and two beta subunits. Mg(2+) is required as a cofactor.

Its subcellular location is the cytoplasm. It carries out the reaction tRNA(Phe) + L-phenylalanine + ATP = L-phenylalanyl-tRNA(Phe) + AMP + diphosphate + H(+). This chain is Phenylalanine--tRNA ligase beta subunit, found in Clostridium acetobutylicum (strain ATCC 824 / DSM 792 / JCM 1419 / IAM 19013 / LMG 5710 / NBRC 13948 / NRRL B-527 / VKM B-1787 / 2291 / W).